Consider the following 934-residue polypeptide: ATP-dependent RNA helicase dbp-10 (934 aa).

The tract at residues 21–43 (LFNNDSDFEDNSSKHHTKKGAVT) is disordered. The short motif at 99–127 (GGFQAMGLNAHLLRAITRKGFSVPTPIQR) is the Q motif element. The region spanning 130-302 (IPLILERKDV…RAGLQEPSLV (173 aa)) is the Helicase ATP-binding domain. 143 to 150 (ARTGSGKT) is an ATP binding site. The DEAD box signature appears at 250–253 (DEAD). 3 disordered regions span residues 343–370 (GPPEGTKEESDELQARKRKREYRPNPKE), 613–722 (ELGP…FQDP), and 851–934 (GAQP…RQKR). The 155-residue stretch at 359–513 (KRKREYRPNP…KNPSFAADVV (155 aa)) folds into the Helicase C-terminal domain. Composition is skewed to acidic residues over residues 644–654 (DEDDEDVDMED) and 662–700 (EETNAFEDFEDEEEEGEAEEAEEAEAKEDPYADDSDSEM). The span at 864-926 (EKAPKDADKF…VAEKKREKNA (63 aa)) shows a compositional bias: basic and acidic residues.

Belongs to the DEAD box helicase family. DDX54/DBP10 subfamily.

Its subcellular location is the nucleus. It localises to the nucleolus. The enzyme catalyses ATP + H2O = ADP + phosphate + H(+). ATP-binding RNA helicase involved in the biogenesis of 60S ribosomal subunits and is required for the normal formation of 25S and 5.8S rRNAs. This chain is ATP-dependent RNA helicase dbp-10 (dbp-10), found in Neurospora crassa (strain ATCC 24698 / 74-OR23-1A / CBS 708.71 / DSM 1257 / FGSC 987).